A 433-amino-acid chain; its full sequence is Homogentisate 1,2-dioxygenase (433 aa).

His288 functions as the Proton acceptor in the catalytic mechanism. His331 and Glu337 together coordinate Fe cation. Homogentisate-binding residues include Tyr346 and His367. His367 is a binding site for Fe cation.

Belongs to the homogentisate dioxygenase family. As to quaternary structure, hexamer; dimer of trimers. Requires Fe cation as cofactor.

It carries out the reaction homogentisate + O2 = 4-maleylacetoacetate + H(+). Its pathway is amino-acid degradation; L-phenylalanine degradation; acetoacetate and fumarate from L-phenylalanine: step 4/6. Involved in the catabolism of homogentisate (2,5-dihydroxyphenylacetate or 2,5-OH-PhAc), a central intermediate in the degradation of phenylalanine and tyrosine. Catalyzes the oxidative ring cleavage of the aromatic ring of homogentisate to yield maleylacetoacetate. The chain is Homogentisate 1,2-dioxygenase from Pseudomonas putida (strain W619).